A 494-amino-acid polypeptide reads, in one-letter code: Lysine--tRNA ligase (494 aa).

2 residues coordinate Mg(2+): E407 and E414.

Belongs to the class-II aminoacyl-tRNA synthetase family. Homodimer. It depends on Mg(2+) as a cofactor.

The protein localises to the cytoplasm. The enzyme catalyses tRNA(Lys) + L-lysine + ATP = L-lysyl-tRNA(Lys) + AMP + diphosphate. The chain is Lysine--tRNA ligase from Lactococcus lactis subsp. cremoris (strain MG1363).